The sequence spans 2090 residues: Host cell factor 1 (2090 aa).

At Ala-2 the chain carries N-acetylalanine. Position 6 is a phosphoserine (Ser-6). Kelch repeat units follow at residues 44-89 (LIVV…GFVC), 93-140 (RLLV…RLGH), 148-194 (KCYL…ITYG), 217-265 (KLVI…TIGN), and 266-313 (KMYV…LMDT). Residues Lys-105, Lys-163, and Lys-244 each participate in a glycyl lysine isopeptide (Lys-Gly) (interchain with G-Cter in ubiquitin) cross-link. A Glycyl lysine isopeptide (Lys-Gly) (interchain with G-Cter in SUMO2) cross-link involves residue Lys-282. Lys-288 carries the post-translational modification N6-acetyllysine. Residue Lys-363 forms a Glycyl lysine isopeptide (Lys-Gly) (interchain with G-Cter in ubiquitin) linkage. Residues 366-469 (PPARVQLVRA…TIQVLPTVPG (104 aa)) form the Fibronectin type-III 1 domain. The disordered stretch occupies residues 407-434 (ATATSPTPNPVPSVPANPPKSPAPAAAA). Phosphoserine is present on Ser-411. Pro residues predominate over residues 413–428 (TPNPVPSVPANPPKSP). The required for interaction with OGT stretch occupies residues 500 to 550 (LVTMRPAGQAGKAPVTVTSLPASVRMVVPTQSAQGTVIGSNPQMSGMAALA). Omega-N-methylarginine occurs at positions 504 and 524. Ser-598, Ser-666, and Ser-669 each carry phosphoserine. The segment at 610–722 (LKTAAAQVGT…KGPLPAGTIL (113 aa)) is interaction with SIN3A. Residues 750–902 (ILGISSVSPS…SLAGAGAHST (153 aa)) form an interaction with ZBTB17 region. N6-acetyllysine is present on Lys-813. The tract at residues 813-912 (KIITAVPKIA…SASLATPITT (100 aa)) is interaction with GABP2. HCF repeat repeat units lie at residues 1010–1035 (TLVC…TVVA), 1072–1097 (VRVC…ATSN), and 1101–1126 (QHGC…AMSS). The interval 1098-1140 (MAGQHGCSNPPCETHETGTTSTATTAMSSMGTGQQRDTRHTSS) is disordered. Residues 1114-1130 (TGTTSTATTAMSSMGTG) are compositionally biased toward low complexity. One copy of the HCF repeat 4; degenerate repeat lies at 1157–1182 (TQGTVKPQCQTQQANMTNTTMTVQAT). Phosphoserine is present on Ser-1204. Arg-1216 carries the post-translational modification Asymmetric dimethylarginine. The residue at position 1223 (Ser-1223) is a Phosphoserine. HCF repeat repeat units follow at residues 1295–1320 (TQVC…SNAG) and 1323–1348 (QRVC…ATSN). 2 disordered regions span residues 1302–1374 (PCET…TTST) and 1444–1486 (TVTS…TTVS). The span at 1308–1321 (TGTTNTATTSNAGS) shows a compositional bias: low complexity. The stretch at 1358–1383 (QQPAGGRPCETHQTTSTGTTMSVSVG) is one HCF repeat 7; degenerate repeat. The HCF repeat 8 repeat unit spans residues 1423-1448 (QRVCSNPPCETHETGTTHTATTVTSN). Positions 1465–1475 (VVSTQGDSANI) are enriched in polar residues. Positions 1476–1486 (TSSSGITTTVS) are enriched in low complexity. Residue Thr-1500 is modified to Phosphothreonine. Phosphoserine occurs at positions 1506, 1559, and 1826. Fibronectin type-III domains are found at residues 1853-1943 (PPPP…TCLP) and 1945-2061 (FPGA…TSKD). Glycyl lysine isopeptide (Lys-Gly) (interchain with G-Cter in ubiquitin) cross-links involve residues Lys-1862 and Lys-1863. Ser-1893 carries the post-translational modification Phosphoserine. Residues 2049-2090 (ATQVRWLQETSKDSSGTKPASKRPMSSPEMKSAPKKSKADGQ) form a disordered region. An N6-acetyllysine modification is found at Lys-2060. Lys-2079 is covalently cross-linked (Glycyl lysine isopeptide (Lys-Gly) (interchain with G-Cter in SUMO2)).

In terms of assembly, composed predominantly of six polypeptides ranging from 110 to 150 kDa and a minor 300 kDa polypeptide. The majority of N- and C-terminal cleavage products remain tightly, albeit non-covalently, associated. Interacts with POU2F1, CREB3, ZBTB17, EGR2, E2F4, CREBZF, SP1, GABP2, Sin3 HDAC complex (SIN3A, HDAC1, HDAC2, SUDS3), SAP30, SIN3B and FHL2. Component of a MLL1 complex, composed of at least the core components KMT2A/MLL1, ASH2L, HCFC1, WDR5 and RBBP5, as well as the facultative components BACC1, CHD8, DPY30, E2F6, HCFC2, HSP70, INO80C, KANSL1, LAS1L, MAX, MCRS1, MEN1, MGA, KAT8, PELP1, PHF20, PRP31, RING2, RUVBL1, RUVBL2, SENP3, TAF1, TAF4, TAF6, TAF7, TAF9 and TEX10. Component of a THAP1/THAP3-HCFC1-OGT complex that is required for the regulation of the transcriptional activity of RRM1. Interacts directly with THAP3 (via its HBM). Interacts (via the Kelch-repeat domain) with THAP1 (via the HBM); the interaction recruits HCHC1 to the RRM1. Interacts directly with OGT; the interaction, which requires the HCFC1 cleavage site domain, glycosylates and promotes the proteolytic processing of HCFC1 and retains OGT in the nucleus. Component of the SET1 complex, at least composed of the catalytic subunit (SETD1A or SETD1B), WDR5, WDR82, RBBP5, ASH2L, CXXC1, HCFC1 and DPY30. Component of the NSL complex at least composed of MOF/KAT8, KANSL1, KANSL2, KANSL3, MCRS1, PHF20, OGT1/OGT, WDR5 and HCFC1. Component of a complex at least composed of ZNF335, HCFC1, CCAR2, EMSY, MKI67, RBBP5, ASH2L and WDR5; the complex is formed as a result of interactions between components of a nuclear receptor-mediated transcription complex and a histone methylation complex. Within the complex interacts with ZNF335. Interacts with TET2 and TET3. Interacts with HCFC1R1. Interacts with THAP11. Interacts (via Kelch domain) with KMT2E (via HBM motif). Interacts with E2F1. Accessory scaffold component of the polycomb repressive deubiquitinase (PR-DUB) complex, at least composed of BAP1, one of ASXL1, ASXL2 or (probably) ASXL3 and one of MBD5 or MBD6; the PR-DUB core associates with a number of accessory proteins, including FOXK1, FOXK2, KDM1B, HCFC1, YY1 and OGT. Interacts with YY1 (via Gly-rich region); the interaction is direct. Interacts with BAP1 (via HBM-like motif). In terms of processing, proteolytically cleaved at one or several PPCE--THET sites within the HCF repeats. Cleavage is promoted by O-glycosylation. Further cleavage of the primary N- and C-terminal chains results in a 'trimming' and accumulation of the smaller chains. Cleavage is promoted by O-glycosylation. O-glycosylated. GlcNAcylation by OGT promotes proteolytic processing. Post-translationally, ubiquitinated. Lys-1862 and Lys-1863 are ubiquitinated both via 'Lys-48'- and 'Lys-63'-linked polyubiquitin chains. BAP1 mediated deubiquitination of 'Lys-48'-linked polyubiquitin chains; deubiquitination by BAP1 does not seem to stabilize the protein.

It is found in the cytoplasm. It localises to the nucleus. Its function is as follows. Transcriptional coregulator. Serves as a scaffold protein, bridging interactions between transcription factors, including THAP11 and ZNF143, and transcriptional coregulators. Involved in control of the cell cycle. Also antagonizes transactivation by ZBTB17 and GABP2; represses ZBTB17 activation of the p15(INK4b) promoter and inhibits its ability to recruit p300. Coactivator for EGR2 and GABP2. Tethers the chromatin modifying Set1/Ash2 histone H3 'Lys-4' methyltransferase (H3K4me) and Sin3 histone deacetylase (HDAC) complexes (involved in the activation and repression of transcription respectively) together. As part of the NSL complex it may be involved in acetylation of nucleosomal histone H4 on several lysine residues. Recruits KMT2E to E2F1 responsive promoters promoting transcriptional activation and thereby facilitates G1 to S phase transition. Modulates expression of homeobox protein PDX1, perhaps acting in concert with transcription factor E2F1, thereby regulating pancreatic beta-cell growth and glucose-stimulated insulin secretion. May negatively modulate transcriptional activity of FOXO3. In Mesocricetus auratus (Golden hamster), this protein is Host cell factor 1.